The primary structure comprises 266 residues: tRNA (guanine-N(1)-)-methyltransferase (266 aa).

S-adenosyl-L-methionine contacts are provided by residues glycine 113 and 137–142 (LGDYVL).

The protein belongs to the RNA methyltransferase TrmD family. As to quaternary structure, homodimer.

It is found in the cytoplasm. It carries out the reaction guanosine(37) in tRNA + S-adenosyl-L-methionine = N(1)-methylguanosine(37) in tRNA + S-adenosyl-L-homocysteine + H(+). Specifically methylates guanosine-37 in various tRNAs. In Paenarthrobacter aurescens (strain TC1), this protein is tRNA (guanine-N(1)-)-methyltransferase.